Here is a 118-residue protein sequence, read N- to C-terminus: Holo-[acyl-carrier-protein] synthase (118 aa).

Positions 8 and 58 each coordinate Mg(2+).

The protein belongs to the P-Pant transferase superfamily. AcpS family. It depends on Mg(2+) as a cofactor.

Its subcellular location is the cytoplasm. It catalyses the reaction apo-[ACP] + CoA = holo-[ACP] + adenosine 3',5'-bisphosphate + H(+). Functionally, transfers the 4'-phosphopantetheine moiety from coenzyme A to a Ser of acyl-carrier-protein. The protein is Holo-[acyl-carrier-protein] synthase of Listeria monocytogenes serotype 4b (strain CLIP80459).